The sequence spans 590 residues: Arginine--tRNA ligase, cytoplasmic (590 aa).

Alanine 2 carries the post-translational modification N-acetylalanine. L-arginine-binding positions include 137–139, histidine 148, tyrosine 322, aspartate 326, and glutamine 350; that span reads SPN. Residues 138–149 carry the 'HIGH' region motif; it reads PNIAKEMHVGHL. Positions 470 to 484 are interaction with tRNA; it reads DTAVYLLYAHARICS.

Belongs to the class-I aminoacyl-tRNA synthetase family.

The protein resides in the cytoplasm. It is found in the cytosol. It catalyses the reaction tRNA(Arg) + L-arginine + ATP = L-arginyl-tRNA(Arg) + AMP + diphosphate. Its function is as follows. Forms part of a macromolecular complex that catalyzes the attachment of specific amino acids to cognate tRNAs during protein synthesis. The protein is Arginine--tRNA ligase, cytoplasmic of Arabidopsis thaliana (Mouse-ear cress).